A 522-amino-acid chain; its full sequence is Amine oxidase [flavin-containing] (522 aa).

Residues 1 to 492 are Cytoplasmic-facing; that stretch reads MTAQNTFDVI…FWERNLPSVG (492 aa). Cysteine 399 is modified (S-8alpha-FAD cysteine). The chain crosses the membrane as a helical; Anchor for type IV membrane protein span at residues 493–513; that stretch reads GFINFLAASVLSVATAAGMLA. The Mitochondrial intermembrane segment spans residues 514 to 522; that stretch reads YQKGLLTRS.

Belongs to the flavin monoamine oxidase family. FAD serves as cofactor.

Its subcellular location is the mitochondrion outer membrane. It carries out the reaction a secondary aliphatic amine + O2 + H2O = a primary amine + an aldehyde + H2O2. In terms of biological role, catalyzes the oxidative deamination of biogenic and xenobiotic amines and has important functions in the metabolism of neuroactive and vasoactive amines in the central nervous system and peripheral tissues. Oxidizes both 5-hydroxytryptamine (5-HT) and beta-phenylethylamine (PEA). The polypeptide is Amine oxidase [flavin-containing] (mao) (Oncorhynchus mykiss (Rainbow trout)).